A 315-amino-acid chain; its full sequence is WD repeat domain-containing protein 83 (315 aa).

WD repeat units follow at residues 23–62 (CSQG…LLRT), 65–104 (GHGY…VVRK), 107–146 (GHAG…PEPV), 151–188 (EARD…VSSD), 190–228 (VGSP…LLGE), 231–272 (GHKN…LALA), and 275–313 (VGSN…AEGG).

It belongs to the WD repeat MORG1 family. In terms of assembly, interacts with EGLN3/PHD3. Interacts with ERK signaling proteins MAP2K1/MEK1, MAP2K2/MEK2, LAMTOR3, ARAF/Raf-1, MAPK1/ERK2 and MAPK3/ERK1. Identified in the spliceosome C complex. Interacts with PARD6B and CRB3. Interacts strongly with GTP-bound RRAGA but not with inactive GDP-bound. Interacts with p62/SQSTM1. As to expression, ubiquitous.

It localises to the cytoplasm. Its subcellular location is the lysosome. The protein resides in the nucleus. Functionally, molecular scaffold protein for various multimeric protein complexes. Acts as a module in the assembly of a multicomponent scaffold for the ERK pathway, linking ERK responses to specific agonists. At low concentrations it enhances ERK activation, whereas high concentrations lead to the inhibition of ERK activation. Also involved in response to hypoxia by acting as a negative regulator of HIF1A/HIF-1-alpha via its interaction with EGLN3/PHD3. May promote degradation of HIF1A. May act by recruiting signaling complexes to a specific upstream activator. May also be involved in pre-mRNA splicing. Participates in tight junction development by regulating apico-basal polarity, a key step in tissue development and organization. Mechanistically, regulates the translocation of PAR6-aPKC from the cytoplasm to the apical surface by acting as an adapter between PARD6B AND CRB3. Also acts as a negative regulator of mTORC1 under nutrient-rich conditions by binding to the active Rag GTPases to inhibit mTORC1 localization to the lysosome and phosphorylation of downstream targets. This facilitates constitutive basal autophagy during nutrient availability. This Mus musculus (Mouse) protein is WD repeat domain-containing protein 83 (Wdr83).